The following is a 229-amino-acid chain: UPF0128 protein aq_756 (229 aa).

Belongs to the UPF0128 family.

This chain is UPF0128 protein aq_756, found in Aquifex aeolicus (strain VF5).